A 464-amino-acid polypeptide reads, in one-letter code: Bifunctional protein GlmU (464 aa).

A pyrophosphorylase region spans residues methionine 1 to arginine 232. UDP-N-acetyl-alpha-D-glucosamine-binding positions include leucine 11–glycine 14, lysine 25, glutamine 76, and glycine 81–threonine 82. Aspartate 106 serves as a coordination point for Mg(2+). UDP-N-acetyl-alpha-D-glucosamine-binding residues include glycine 143, glutamate 157, asparagine 172, and asparagine 230. Residue asparagine 230 participates in Mg(2+) binding. Residues valine 233 to alanine 253 form a linker region. The segment at glycine 254–aspartate 464 is N-acetyltransferase. Residues arginine 336 and lysine 354 each contribute to the UDP-N-acetyl-alpha-D-glucosamine site. Histidine 366 functions as the Proton acceptor in the catalytic mechanism. The UDP-N-acetyl-alpha-D-glucosamine site is built by tyrosine 369 and asparagine 380. Acetyl-CoA contacts are provided by residues asparagine 389–tyrosine 390, serine 408, alanine 426, and arginine 443.

This sequence in the N-terminal section; belongs to the N-acetylglucosamine-1-phosphate uridyltransferase family. In the C-terminal section; belongs to the transferase hexapeptide repeat family. Homotrimer. Mg(2+) is required as a cofactor.

It localises to the cytoplasm. The catalysed reaction is alpha-D-glucosamine 1-phosphate + acetyl-CoA = N-acetyl-alpha-D-glucosamine 1-phosphate + CoA + H(+). The enzyme catalyses N-acetyl-alpha-D-glucosamine 1-phosphate + UTP + H(+) = UDP-N-acetyl-alpha-D-glucosamine + diphosphate. Its pathway is nucleotide-sugar biosynthesis; UDP-N-acetyl-alpha-D-glucosamine biosynthesis; N-acetyl-alpha-D-glucosamine 1-phosphate from alpha-D-glucosamine 6-phosphate (route II): step 2/2. It participates in nucleotide-sugar biosynthesis; UDP-N-acetyl-alpha-D-glucosamine biosynthesis; UDP-N-acetyl-alpha-D-glucosamine from N-acetyl-alpha-D-glucosamine 1-phosphate: step 1/1. The protein operates within bacterial outer membrane biogenesis; LPS lipid A biosynthesis. Functionally, catalyzes the last two sequential reactions in the de novo biosynthetic pathway for UDP-N-acetylglucosamine (UDP-GlcNAc). The C-terminal domain catalyzes the transfer of acetyl group from acetyl coenzyme A to glucosamine-1-phosphate (GlcN-1-P) to produce N-acetylglucosamine-1-phosphate (GlcNAc-1-P), which is converted into UDP-GlcNAc by the transfer of uridine 5-monophosphate (from uridine 5-triphosphate), a reaction catalyzed by the N-terminal domain. This chain is Bifunctional protein GlmU, found in Syntrophotalea carbinolica (strain DSM 2380 / NBRC 103641 / GraBd1) (Pelobacter carbinolicus).